We begin with the raw amino-acid sequence, 104 residues long: Integration host factor subunit alpha (104 aa).

It belongs to the bacterial histone-like protein family. As to quaternary structure, heterodimer of an alpha and a beta chain.

Functionally, this protein is one of the two subunits of integration host factor, a specific DNA-binding protein that functions in genetic recombination as well as in transcriptional and translational control. In Bartonella quintana (strain Toulouse) (Rochalimaea quintana), this protein is Integration host factor subunit alpha.